We begin with the raw amino-acid sequence, 182 residues long: MWPPDPDPDPDPEPAGGSRPGPAVPGLRALLPARAFLCSLKGRLLLAESGLSFITFICYVASSASAFLTAPLLEFLLALYFLFADAMQLNDKWQGLCWPMMDFLRCVTAALIYFAISITAIAKYSDGASKAAGVFGFFATIVFATDFYLIFNDVAKFLKQGDSADETTAHKTEEENSDSDSD.

The span at 1–12 (MWPPDPDPDPDP) shows a compositional bias: acidic residues. Positions 1–21 (MWPPDPDPDPDPEPAGGSRPG) are disordered. In terms of domain architecture, MARVEL spans 36 to 155 (FLCSLKGRLL…DFYLIFNDVA (120 aa)). Helical transmembrane passes span 64–84 (ASAFLTAPLLEFLLALYFLFA), 101–121 (MDFLRCVTAALIYFAISITAI), and 131–151 (AAGVFGFFATIVFATDFYLIF).

It belongs to the chemokine-like factor family. As to expression, expressed in the leukocytes, placenta and testis.

Its subcellular location is the membrane. The polypeptide is CKLF-like MARVEL transmembrane domain-containing protein 3 (CMTM3) (Homo sapiens (Human)).